Consider the following 611-residue polypeptide: Elongation factor 4 1 (611 aa).

Positions 11-193 constitute a tr-type G domain; sequence QHIRNFSIVA…QIVHKIPAPQ (183 aa). GTP contacts are provided by residues 23-28 and 140-143; these read DHGKST and NKID.

It belongs to the TRAFAC class translation factor GTPase superfamily. Classic translation factor GTPase family. LepA subfamily.

The protein resides in the cell membrane. It catalyses the reaction GTP + H2O = GDP + phosphate + H(+). Its function is as follows. Required for accurate and efficient protein synthesis under certain stress conditions. May act as a fidelity factor of the translation reaction, by catalyzing a one-codon backward translocation of tRNAs on improperly translocated ribosomes. Back-translocation proceeds from a post-translocation (POST) complex to a pre-translocation (PRE) complex, thus giving elongation factor G a second chance to translocate the tRNAs correctly. Binds to ribosomes in a GTP-dependent manner. This Lactiplantibacillus plantarum (strain ATCC BAA-793 / NCIMB 8826 / WCFS1) (Lactobacillus plantarum) protein is Elongation factor 4 1.